Reading from the N-terminus, the 206-residue chain is Small ribosomal subunit protein uS4 (206 aa).

Over residues 25–39 (DKLLDRKPNGPGKER) the composition is skewed to basic and acidic residues. A disordered region spans residues 25–49 (DKLLDRKPNGPGKERGARKRGKTSV). The S4 RNA-binding domain maps to 95–157 (QRLDNTIYRM…KGIQNLIRHN (63 aa)).

It belongs to the universal ribosomal protein uS4 family. In terms of assembly, part of the 30S ribosomal subunit. Contacts protein S5. The interaction surface between S4 and S5 is involved in control of translational fidelity.

Functionally, one of the primary rRNA binding proteins, it binds directly to 16S rRNA where it nucleates assembly of the body of the 30S subunit. Its function is as follows. With S5 and S12 plays an important role in translational accuracy. The protein is Small ribosomal subunit protein uS4 of Treponema denticola (strain ATCC 35405 / DSM 14222 / CIP 103919 / JCM 8153 / KCTC 15104).